A 361-amino-acid chain; its full sequence is Probable dual-specificity RNA methyltransferase RlmN (361 aa).

Catalysis depends on Glu-91, which acts as the Proton acceptor. Positions 97-329 (QHYGLSVCVT…KKKGVNCVVR (233 aa)) constitute a Radical SAM core domain. Cys-104 and Cys-340 form a disulfide bridge. Residues Cys-111, Cys-115, and Cys-118 each coordinate [4Fe-4S] cluster. Residues 163 to 164 (GE), Ser-195, 218 to 220 (SLH), and Asn-296 each bind S-adenosyl-L-methionine. The active-site S-methylcysteine intermediate is the Cys-340.

This sequence belongs to the radical SAM superfamily. RlmN family. [4Fe-4S] cluster serves as cofactor.

It localises to the cytoplasm. It carries out the reaction adenosine(2503) in 23S rRNA + 2 reduced [2Fe-2S]-[ferredoxin] + 2 S-adenosyl-L-methionine = 2-methyladenosine(2503) in 23S rRNA + 5'-deoxyadenosine + L-methionine + 2 oxidized [2Fe-2S]-[ferredoxin] + S-adenosyl-L-homocysteine. It catalyses the reaction adenosine(37) in tRNA + 2 reduced [2Fe-2S]-[ferredoxin] + 2 S-adenosyl-L-methionine = 2-methyladenosine(37) in tRNA + 5'-deoxyadenosine + L-methionine + 2 oxidized [2Fe-2S]-[ferredoxin] + S-adenosyl-L-homocysteine. In terms of biological role, specifically methylates position 2 of adenine 2503 in 23S rRNA and position 2 of adenine 37 in tRNAs. The sequence is that of Probable dual-specificity RNA methyltransferase RlmN from Streptococcus pneumoniae serotype 19F (strain G54).